The primary structure comprises 363 residues: Fructose-bisphosphate aldolase (363 aa).

Substrate-binding residues include arginine 56 and lysine 147. Glutamate 188 functions as the Proton acceptor in the catalytic mechanism. Lysine 230 acts as the Schiff-base intermediate with dihydroxyacetone-P in catalysis.

Belongs to the class I fructose-bisphosphate aldolase family.

It catalyses the reaction beta-D-fructose 1,6-bisphosphate = D-glyceraldehyde 3-phosphate + dihydroxyacetone phosphate. It functions in the pathway carbohydrate degradation; glycolysis; D-glyceraldehyde 3-phosphate and glycerone phosphate from D-glucose: step 4/4. The protein is Fructose-bisphosphate aldolase (FBPA) of Echinococcus multilocularis (Fox tapeworm).